The chain runs to 620 residues: Sodium-dependent dopamine transporter (620 aa).

Residues 1–56 lie on the Cytoplasmic side of the membrane; it reads MSKSKCSVGLMSSVVAPAKEPNAVGPKEVELILVKEQNGVQLTSSTLTNPRQSPVE. A discontinuously helical transmembrane segment spans residues 57-95; sequence AQDRETWGKKIDFLLSVIGFAVDLANVWRFPYLCYKNGG. Na(+)-binding residues include glycine 75, alanine 77, valine 78, aspartate 79, and asparagine 82. A dopamine-binding site is contributed by aspartate 79. The next 2 helical transmembrane spans lie at 96-127 and 128-171; these read GAFL…NREG and AAGV…FSSF. Residues serine 149 and glycine 153 each contribute to the dopamine site. Over 172–236 the chain is Extracellular; sequence TTELPWIHCN…SHGIDDLGPP (65 aa). An intrachain disulfide couples cysteine 180 to cysteine 189. Residues asparagine 181, asparagine 188, and asparagine 205 are each glycosylated (N-linked (GlcNAc...) asparagine). 2 helical membrane passes run 237-256 and 257-287; these read RWQL…FSLW and KGVK…GVTL. At 288–306 the chain is on the extracellular side; the sequence is PGAIDGIRAYLSVDFYRLC. The discontinuously helical transmembrane segment at 307–335 threads the bilayer; the sequence is EASVWIDAATQVCFSLGVGFGVLIAFSSY. Residue glutamine 317 coordinates chloride. Phenylalanine 320 contacts dopamine. Na(+) contacts are provided by serine 321 and asparagine 353. Residue serine 321 coordinates chloride. Residues 336–376 traverse the membrane as a helical segment; that stretch reads NKFTNNCYRDAIVTTSINSLTSFSSGFVVFSFLGYMAQKHS. Serine 357 is a chloride binding site. Residues 377–400 are Extracellular-facing; it reads VPIGDVAKDGPGLIFIIYPEAIAT. The next 3 helical transmembrane spans lie at 401–442, 443–466, and 467–499; these read LPLS…QLLH, RHRE…CVTN, and GGIY…AWFY. Na(+) is bound by residues leucine 418, aspartate 421, and serine 422. Residues serine 422 and alanine 423 each coordinate dopamine. Over 500–516 the chain is Cytoplasmic; sequence GVGQFSDDIQQMTGQRP. Residues 517-542 traverse the membrane as a helical segment; that stretch reads SLYWRLCWKLVSPCFLLFVVVVSIVT. The Extracellular portion of the chain corresponds to 543 to 553; it reads FRPPHYGAYIF. Residues 554–583 form a helical membrane-spanning segment; that stretch reads PDWANALGWVIATSSMAMVPIYAAYKFCSL. The interaction with TGFB1I1 stretch occupies residues 561-590; that stretch reads GWVIATSSMAMVPIYAAYKFCSLPGSFREK. The Cytoplasmic portion of the chain corresponds to 584 to 620; it reads PGSFREKLAYAIAPEKDRELVDRGEVRQFTLRHWLKV.

This sequence belongs to the sodium:neurotransmitter symporter (SNF) (TC 2.A.22) family. SLC6A3 subfamily. Monomer. Homooligomer; disulfide-linked. Interacts with PRKCABP and TGFB1I1. Interacts (via N-terminus) with SYNGR3 (via N-terminus). Interacts with SLC18A2. Interacts with TOR1A (ATP-bound); TOR1A regulates SLC6A3 subcellular location. Interacts with alpha-synuclein/SNCA. Interacts with SEPTIN4. As to expression, highly expressed in substantia nigra. Expressed in axonal varicosities in dopaminergic nerve terminals (at protein level). Expressed in the striatum (at protein level).

It localises to the cell membrane. The protein resides in the cell projection. Its subcellular location is the neuron projection. The protein localises to the axon. It catalyses the reaction dopamine(out) + chloride(out) + Na(+)(out) = dopamine(in) + chloride(in) + Na(+)(in). The enzyme catalyses dopamine(out) + chloride(out) + 2 Na(+)(out) = dopamine(in) + chloride(in) + 2 Na(+)(in). It carries out the reaction (R)-noradrenaline(out) + chloride(out) + Na(+)(out) = (R)-noradrenaline(in) + chloride(in) + Na(+)(in). Its activity is regulated as follows. Inhibited by cocaine, which occupies the same binding site as dopamine. Inhibited by zinc ions. Enhanced by the antibiotic valinomycin. Inhibited by benztropine. Inhibited by GBR 12909 dihydrochloride and amphetamine. Inhibited by mazindol, GBR 12783 dihydrochloride, nomifensine, diclofensine, amfonelic acid, Lu 19005, Win-35428, bupropion and ritalin. Its function is as follows. Mediates sodium- and chloride-dependent transport of dopamine. Also mediates sodium- and chloride-dependent transport of norepinephrine (also known as noradrenaline). Regulator of light-dependent retinal hyaloid vessel regression, downstream of OPN5 signaling. In Homo sapiens (Human), this protein is Sodium-dependent dopamine transporter (SLC6A3).